Here is a 259-residue protein sequence, read N- to C-terminus: Indole-3-glycerol phosphate synthase (259 aa).

The protein belongs to the TrpC family.

The catalysed reaction is 1-(2-carboxyphenylamino)-1-deoxy-D-ribulose 5-phosphate + H(+) = (1S,2R)-1-C-(indol-3-yl)glycerol 3-phosphate + CO2 + H2O. It participates in amino-acid biosynthesis; L-tryptophan biosynthesis; L-tryptophan from chorismate: step 4/5. The polypeptide is Indole-3-glycerol phosphate synthase (Rhodopirellula baltica (strain DSM 10527 / NCIMB 13988 / SH1)).